A 257-amino-acid polypeptide reads, in one-letter code: Succinate dehydrogenase subunit 5, mitochondrial (257 aa).

The N-terminal 89 residues, Met-1 to Phe-89, are a transit peptide targeting the mitochondrion.

Component of complex II composed of eight subunits in plants: four classical SDH subunits SDH1, SDH2, SDH3 and SDH4 (a flavoprotein (FP), an iron-sulfur protein (IP), and a cytochrome b composed of a large and a small subunit.), as well as four subunits unknown in mitochondria from bacteria and heterotrophic eukaryotes.

It is found in the mitochondrion inner membrane. The protein operates within carbohydrate metabolism; tricarboxylic acid cycle. The protein is Succinate dehydrogenase subunit 5, mitochondrial of Arabidopsis thaliana (Mouse-ear cress).